The primary structure comprises 219 residues: MSEQEAQAPGGRGLPPDMLAEQVELWWSQQPRRSALCFVVAVGLVAGCGAGGVALLSTTSSRSGEWRLATGTVLCLLALLVLVKQLMSSAVQDMNCIRQAHHVALLRSGGGADALVVLLSGLVLLVTGLTLAGLAAAPAPARPLAAMLSVGIALAALGSLLLLGLLLYQVGVSGHCPSICMATPSTHSGHGGHGSIFSISGQLSAGRRHETTSSIASLI.

4 helical membrane passes run 36–56 (LCFV…VALL), 68–88 (LATG…QLMS), 114–134 (ALVV…LAGL), and 147–167 (MLSV…GLLL).

Its subcellular location is the membrane. This chain is Transmembrane protein 125 (TMEM125), found in Homo sapiens (Human).